The following is a 283-amino-acid chain: Homeobox protein Hox-C12b (283 aa).

The segment at residues 215–274 is a DNA-binding region (homeobox); sequence TRKKRKPYSKLQLNELEGEFILNEFITRQRRRELSDRLNLTDQQVKIWFQNRRMKKKRLL.

Belongs to the Abd-B homeobox family.

Its subcellular location is the nucleus. Sequence-specific transcription factor which is part of a developmental regulatory system that provides cells with specific positional identities on the anterior-posterior axis. In Danio rerio (Zebrafish), this protein is Homeobox protein Hox-C12b (hoxc12b).